We begin with the raw amino-acid sequence, 257 residues long: UPF0246 protein BF4021 (257 aa).

Belongs to the UPF0246 family.

This is UPF0246 protein BF4021 from Bacteroides fragilis (strain YCH46).